Here is a 422-residue protein sequence, read N- to C-terminus: Sphingomyelin phosphodiesterase 2 (422 aa).

Glu49 lines the Mg(2+) pocket. His272 acts as the Proton acceptor in catalysis. The next 2 helical transmembrane spans lie at 325 to 345 (ALFGYVMILGLSLLVLLCVLA) and 354 to 374 (AIMLWTPSVGLVLGAGAVYLF). A disordered region spans residues 397 to 422 (TETQDLGSEPHPTHCRQQEADRAEEK). A compositionally biased stretch (basic and acidic residues) spans 412–422 (RQQEADRAEEK).

This sequence belongs to the neutral sphingomyelinase family. Mg(2+) serves as cofactor.

It is found in the membrane. It carries out the reaction a sphingomyelin + H2O = phosphocholine + an N-acylsphing-4-enine + H(+). The enzyme catalyses 1-O-octadecyl-sn-glycero-3-phosphocholine + H2O = 1-O-octadecyl-sn-glycerol + phosphocholine + H(+). The catalysed reaction is an N-(acyl)-sphingosylphosphocholine + H2O = an N-acyl-sphingoid base + phosphocholine + H(+). It catalyses the reaction 1-hexadecanoyl-sn-glycero-3-phosphocholine + H2O = 1-hexadecanoyl-sn-glycerol + phosphocholine + H(+). It carries out the reaction a sphingosylphosphocholine + H2O = a sphingoid base + phosphocholine + H(+). The enzyme catalyses 1-O-hexadecyl-sn-glycero-3-phosphocholine + H2O = 1-O-hexadecyl-sn-glycerol + phosphocholine + H(+). It functions in the pathway lipid metabolism; sphingolipid metabolism. Functionally, catalyzes the hydrolysis of sphingomyelin to form ceramide and phosphocholine. Ceramide mediates numerous cellular functions, such as apoptosis and growth arrest, and is capable of regulating these 2 cellular events independently. Also hydrolyzes sphingosylphosphocholine. Hydrolyze 1-acyl-2-lyso-sn-glycero-3-phosphocholine (lyso-PC) and 1-O-alkyl-2-lyso-sn-glycero-3-phosphocholine (lyso-platelet-activating factor). In Rattus norvegicus (Rat), this protein is Sphingomyelin phosphodiesterase 2 (Smpd2).